Consider the following 947-residue polypeptide: Protein NETWORKED 2A (947 aa).

The NAB domain occupies 10–90 (YSWWWASHIR…ERYDHLSREL (81 aa)). The tract at residues 105 to 131 (VQFPLEDDSDENEDYDGRPRKPPKHLH) is disordered. Residues 109–118 (LEDDSDENED) show a composition bias toward acidic residues. Coiled-coil stretches lie at residues 348-454 (KLAE…IQDV) and 568-619 (VLRD…QKLD). Basic and acidic residues-rich tracts occupy residues 618–627 (LDTTGKDSPH) and 635–644 (LEHEQGHHET). 3 disordered regions span residues 618-675 (LDTT…RTKS), 743-763 (RIES…AVAS), and 911-947 (KNRQ…KLPE). The segment covering 645 to 660 (VSISPTSNFSVATTPH) has biased composition (polar residues). Residues 662–675 (QVGDVKRTPGRTKS) show a composition bias toward basic and acidic residues. Residues 722–809 (VHQIQKYQTT…LANIQEEIAR (88 aa)) adopt a coiled-coil conformation. Composition is skewed to polar residues over residues 749–761 (QQES…NTAV) and 915–927 (QKQS…SCVS).

The protein belongs to the NET family. Expressed specifically in pollen.

The protein localises to the cell membrane. Functionally, plant-specific actin binding protein. Associates with F-actin at the plasma membrane in growing pollen tubes. May be part of a membrane-cytoskeletal adapter complex. The polypeptide is Protein NETWORKED 2A (Arabidopsis thaliana (Mouse-ear cress)).